We begin with the raw amino-acid sequence, 123 residues long: Undecaprenol kinase (123 aa).

At 1–33 (MDSKDHRNELNRFFKSFVHAGRGIWETARTERN) the chain is on the cytoplasmic side. A helical transmembrane segment spans residues 34–51 (FQFHAAAACAVLICGFLV). Topologically, residues 52–57 (ELSIIE) are extracellular. Residues 58–74 (WMIIFLLIGGMFSLELL) form a helical membrane-spanning segment. Topologically, residues 75-99 (NTAIEHTVDLITDKHHPLAKAAKDA) are cytoplasmic. A helical membrane pass occupies residues 100-120 (AAGAVCVFAVISCIIGLLIFL). Residues 121–123 (PKL) are Extracellular-facing.

Belongs to the bacterial diacylglycerol kinase family.

It localises to the cell membrane. The enzyme catalyses di-trans,octa-cis-undecaprenol + ATP = di-trans,octa-cis-undecaprenyl phosphate + ADP + H(+). Functionally, catalyzes the phosphorylation of undecaprenol in vitro, which is probably the physiological substrate. Exhibits no detectable activity against other substrates such as monoacylglycerol, ceramide, or diacylglycerol (DAG). Appears indispensable for the maintenance of spore stability and viability in B.subtilis. In Bacillus subtilis (strain 168), this protein is Undecaprenol kinase (dgkA).